The following is a 65-amino-acid chain: Large ribosomal subunit protein bL33m (65 aa).

A mitochondrion-targeting transit peptide spans 1-8 (MLLSAVSF).

This sequence belongs to the bacterial ribosomal protein bL33 family. Component of the mitochondrial ribosome large subunit (39S) which comprises a 16S rRNA and about 50 distinct proteins.

The protein resides in the mitochondrion. This chain is Large ribosomal subunit protein bL33m (Mrpl33), found in Mus musculus (Mouse).